The sequence spans 434 residues: UDP-N-acetylmuramate--L-alanine ligase (434 aa).

110 to 116 (GAHGKTS) contributes to the ATP binding site.

It belongs to the MurCDEF family.

It is found in the cytoplasm. The catalysed reaction is UDP-N-acetyl-alpha-D-muramate + L-alanine + ATP = UDP-N-acetyl-alpha-D-muramoyl-L-alanine + ADP + phosphate + H(+). Its pathway is cell wall biogenesis; peptidoglycan biosynthesis. Functionally, cell wall formation. The sequence is that of UDP-N-acetylmuramate--L-alanine ligase from Limosilactobacillus reuteri (strain DSM 20016) (Lactobacillus reuteri).